Consider the following 428-residue polypeptide: Endoplasmic reticulum junction formation protein lunapark (428 aa).

Glycine 2 is lipidated: N-myristoyl glycine. At 2-45 (GGLFSRWRTKLSTVEVLESIDKEIQALEEFREKNQRLQKLRVGR) the chain is on the cytoplasmic side. Residues 16–43 (EVLESIDKEIQALEEFREKNQRLQKLRV) are a coiled coil. The helical transmembrane segment at 46–66 (LILYSSVLYLFTCLIVYLWYL) threads the bilayer. The Lumenal portion of the chain corresponds to 67 to 77 (PDEFTARLAMT). The chain crosses the membrane as a helical span at residues 78–98 (LPFFAFPLIIWSIRTVIIFFF). Over 99–428 (SKRTERNNEA…ELNGESLTAE (330 aa)) the chain is Cytoplasmic. A coiled-coil region spans residues 102–128 (TERNNEALDDLKSQRKKILEEVMEKET). A phosphoserine mark is found at serine 114, serine 153, serine 177, serine 182, and serine 194. Positions 143-248 (SKKAKECEPP…PPGPPLARPI (106 aa)) are disordered. Over residues 185–198 (QGPPPQVPVSPGPP) the composition is skewed to pro residues. 2 positions are modified to phosphothreonine: threonine 211 and threonine 213. A phosphoserine mark is found at serine 217 and serine 227. The C4-type; plays a role in ER morphology zinc-finger motif lies at 276-301 (CQQCFSHNGMALKEEFEYIAFRCAYC). Phosphoserine occurs at positions 321, 353, and 384. A disordered region spans residues 361 to 428 (NNTEQTDDKI…ELNGESLTAE (68 aa)). Residues 386–401 (SEEPEEKQETENEEAS) are compositionally biased toward acidic residues. Serine 414 carries the post-translational modification Phosphoserine.

The protein belongs to the lunapark family. In terms of assembly, homodimer; homodimerization requires the C4-type zinc finger motif and decreases during mitosis in a phosphorylation-dependent manner. Post-translationally, myristoylated; myristoylation is necessary for the endoplasmic reticulum (ER) three-way ER tubular junction formation, but is not required neither for membrane translocation, membrane topology formation, nor for the specific localization to ER membranes. In terms of processing, phosphorylated. Phosphorylation occurs at Ser-177, Ser-182, Ser-217, Ser-227, Ser-321 and Ser-384 during interphase. Phosphorylation occurs at Ser-114, Ser-153, Ser-194, Thr-211 and Ser-353 during mitosis; these phosphorylations reduce both its homodimerization and the ER three-way tubular junction formation. Subject to proteasomal degradation following phosphorylation during mitosis.

The protein resides in the endoplasmic reticulum membrane. Functionally, endoplasmic reticulum (ER)-shaping membrane protein that plays a role in determining ER morphology. Involved in the stabilization of nascent three-way ER tubular junctions within the ER network. May also play a role as a curvature-stabilizing protein within three-way ER tubular junction network. May be involved in limb and central nervous system development. This Pongo abelii (Sumatran orangutan) protein is Endoplasmic reticulum junction formation protein lunapark.